Reading from the N-terminus, the 401-residue chain is Imidazolonepropionase (401 aa).

Positions 70 and 72 each coordinate Fe(3+). Zn(2+) is bound by residues His-70 and His-72. 4-imidazolone-5-propanoate contacts are provided by Arg-79, Tyr-142, and His-175. Tyr-142 is a binding site for N-formimidoyl-L-glutamate. His-238 provides a ligand contact to Fe(3+). Position 238 (His-238) interacts with Zn(2+). Gln-241 contributes to the 4-imidazolone-5-propanoate binding site. Asp-313 contributes to the Fe(3+) binding site. Position 313 (Asp-313) interacts with Zn(2+). Asn-315 and Gly-317 together coordinate N-formimidoyl-L-glutamate. Thr-318 lines the 4-imidazolone-5-propanoate pocket.

It belongs to the metallo-dependent hydrolases superfamily. HutI family. It depends on Zn(2+) as a cofactor. Fe(3+) serves as cofactor.

The protein localises to the cytoplasm. It carries out the reaction 4-imidazolone-5-propanoate + H2O = N-formimidoyl-L-glutamate. It functions in the pathway amino-acid degradation; L-histidine degradation into L-glutamate; N-formimidoyl-L-glutamate from L-histidine: step 3/3. Its function is as follows. Catalyzes the hydrolytic cleavage of the carbon-nitrogen bond in imidazolone-5-propanoate to yield N-formimidoyl-L-glutamate. It is the third step in the universal histidine degradation pathway. This chain is Imidazolonepropionase, found in Xanthomonas axonopodis pv. citri (strain 306).